Here is a 357-residue protein sequence, read N- to C-terminus: 3-isopropylmalate dehydrogenase (357 aa).

77-90 (GPKWDNLEGSKRPE) contributes to the NAD(+) binding site. Substrate-binding residues include Arg97, Arg107, Arg136, and Asp224. Residues Asp224, Asp248, and Asp252 each contribute to the Mg(2+) site. 282–294 (GSAPDIAGLDIAN) is an NAD(+) binding site.

The protein belongs to the isocitrate and isopropylmalate dehydrogenases family. LeuB type 1 subfamily. In terms of assembly, homodimer. Mg(2+) serves as cofactor. The cofactor is Mn(2+).

Its subcellular location is the cytoplasm. It carries out the reaction (2R,3S)-3-isopropylmalate + NAD(+) = 4-methyl-2-oxopentanoate + CO2 + NADH. It functions in the pathway amino-acid biosynthesis; L-leucine biosynthesis; L-leucine from 3-methyl-2-oxobutanoate: step 3/4. Functionally, catalyzes the oxidation of 3-carboxy-2-hydroxy-4-methylpentanoate (3-isopropylmalate) to 3-carboxy-4-methyl-2-oxopentanoate. The product decarboxylates to 4-methyl-2 oxopentanoate. The sequence is that of 3-isopropylmalate dehydrogenase (leuB) from Clostridium pasteurianum.